A 362-amino-acid polypeptide reads, in one-letter code: Serine/threonine-protein kinase SBK2 (362 aa).

The segment covering 1–11 (MPGKQSEDRPM) has biased composition (basic and acidic residues). Residues 1–20 (MPGKQSEDRPMEVAAVEDGG) are disordered. Positions 62–330 (YEEVRPLGQG…IKSYLGQPWK (269 aa)) constitute a Protein kinase domain. ATP-binding positions include 68–76 (LGQGRFGRV) and Lys91. Asp183 functions as the Proton acceptor in the catalytic mechanism. Positions 317 to 362 (PVSSIKSYLGQPWKQREEGAEELTKELREDGSRGGQEAAKGEQPAC) are disordered. Positions 330-348 (KQREEGAEELTKELREDGS) are enriched in basic and acidic residues.

Belongs to the protein kinase superfamily. Ser/Thr protein kinase family. STKL subfamily.

It carries out the reaction L-seryl-[protein] + ATP = O-phospho-L-seryl-[protein] + ADP + H(+). It catalyses the reaction L-threonyl-[protein] + ATP = O-phospho-L-threonyl-[protein] + ADP + H(+). This Rattus norvegicus (Rat) protein is Serine/threonine-protein kinase SBK2 (Sbk2).